The sequence spans 1160 residues: DNA polymerase III subunit alpha (1160 aa).

The protein belongs to the DNA polymerase type-C family. DnaE subfamily. The DNA polymerase III holoenzyme complex contains at least 10 different subunits organized into 3 functionally essential subassemblies: the Pol III core, the beta sliding clamp processivity factor and the clamp-loading complex. The Pol III core (subunits alpha, epsilon and theta) contains the polymerase and the 3'-5' exonuclease proofreading activities. The polymerase is tethered to the template via the dimeric beta sliding clamp processivity factor. The clamp loader (also called gamma complex) assembles the beta sliding clamp onto the primed template and plays a central role in the organization and communication at the replication fork. The clamp-loading complex contains delta, delta', psi and chi, and 3 copies of either or both of two different DnaX proteins, gamma and tau. The DNA replisome complex has a single clamp loader (3 tau and 1 each of delta, delta', psi and chi subunits) which binds 3 Pol III cores (1 core on the leading strand and 2 on the lagging strand) each with a beta sliding clamp dimer. Additional proteins in the replisome are other copies of gamma, psi and chi, Ssb, DNA helicase and RNA primase. Interacts with the beta sliding-clamp subunit via the peptide Gln-Ala-Asp-Met-Phe (residues 920-924).

The protein resides in the cytoplasm. It catalyses the reaction DNA(n) + a 2'-deoxyribonucleoside 5'-triphosphate = DNA(n+1) + diphosphate. DNA polymerase III is a complex, multichain enzyme responsible for most of the replicative synthesis in bacteria. This DNA polymerase also exhibits 3' to 5' exonuclease activity. The alpha chain is the DNA polymerase catalytic subunit. It is tethered to replicating DNA by the beta sliding clamp (dnaN), which confers extremely high processivity to the catalytic subunit, copying a 5.4 kb genome in 11 seconds, a speed of at least 500 nucleotides/second at 30 degrees Celsius. The polypeptide is DNA polymerase III subunit alpha (dnaE) (Escherichia coli (strain K12)).